Here is a 102-residue protein sequence, read N- to C-terminus: Alpha-hemoglobin-stabilizing protein (102 aa).

This sequence belongs to the AHSP family. In terms of assembly, monomer. Forms a heterodimer with free alpha-hemoglobin. Does not bind beta-hemoglobin nor alpha(2)beta(2) hemoglobin A. In terms of tissue distribution, expressed in spleen, bone marrow, and blood, with highest levels in bone marrow.

It localises to the cytoplasm. In terms of biological role, acts as a chaperone to prevent the harmful aggregation of alpha-hemoglobin during normal erythroid cell development. Specifically protects free alpha-hemoglobin from precipitation. This is Alpha-hemoglobin-stabilizing protein (Ahsp) from Mus musculus (Mouse).